Here is a 486-residue protein sequence, read N- to C-terminus: Cobyric acid synthase (486 aa).

In terms of domain architecture, GATase cobBQ-type spans 248–435; it reads VLNVVVPVLP…LHGLFESPAA (188 aa). Cys-329 (nucleophile) is an active-site residue. The active site involves His-427.

Belongs to the CobB/CobQ family. CobQ subfamily.

Its pathway is cofactor biosynthesis; adenosylcobalamin biosynthesis. Catalyzes amidations at positions B, D, E, and G on adenosylcobyrinic A,C-diamide. NH(2) groups are provided by glutamine, and one molecule of ATP is hydrogenolyzed for each amidation. The protein is Cobyric acid synthase of Pseudomonas syringae pv. syringae (strain B728a).